The sequence spans 358 residues: Putative inhibitor of apoptosis (358 aa).

BIR repeat units lie at residues 4–70 (EKDR…CPFL) and 90–157 (YAAR…CEYL). Zn(2+) is bound by residues Cys127, Cys130, His147, and Cys154. The CARD domain occupies 193–283 (EPPNDLSLIR…MLYKHLFVQQ (91 aa)). The RING-type zinc finger occupies 311–346 (CKVCMDKEVSIVFIPCGHLVVCKDCAPSLRKCPICR).

It belongs to the IAP family.

The polypeptide is Putative inhibitor of apoptosis (PIAP) (Sus scrofa (Pig)).